The primary structure comprises 297 residues: Acetyl-coenzyme A carboxylase carboxyl transferase subunit beta (297 aa).

One can recognise a CoA carboxyltransferase N-terminal domain in the interval Leu27 to Val296. Cys31, Cys34, Cys50, and Cys53 together coordinate Zn(2+). A C4-type zinc finger spans residues Cys31–Cys53.

Belongs to the AccD/PCCB family. As to quaternary structure, acetyl-CoA carboxylase is a heterohexamer composed of biotin carboxyl carrier protein (AccB), biotin carboxylase (AccC) and two subunits each of ACCase subunit alpha (AccA) and ACCase subunit beta (AccD). It depends on Zn(2+) as a cofactor.

Its subcellular location is the cytoplasm. It carries out the reaction N(6)-carboxybiotinyl-L-lysyl-[protein] + acetyl-CoA = N(6)-biotinyl-L-lysyl-[protein] + malonyl-CoA. The protein operates within lipid metabolism; malonyl-CoA biosynthesis; malonyl-CoA from acetyl-CoA: step 1/1. Functionally, component of the acetyl coenzyme A carboxylase (ACC) complex. Biotin carboxylase (BC) catalyzes the carboxylation of biotin on its carrier protein (BCCP) and then the CO(2) group is transferred by the transcarboxylase to acetyl-CoA to form malonyl-CoA. The protein is Acetyl-coenzyme A carboxylase carboxyl transferase subunit beta of Pseudomonas putida (strain ATCC 700007 / DSM 6899 / JCM 31910 / BCRC 17059 / LMG 24140 / F1).